The following is a 464-amino-acid chain: Fumarate hydratase class II (464 aa).

Residues 97–99 (SGT), 128–131 (HPND), 138–140 (SSN), and threonine 186 contribute to the substrate site. The active-site Proton donor/acceptor is histidine 187. Residue serine 317 is part of the active site. Substrate contacts are provided by residues serine 318 and 323-325 (KVN).

This sequence belongs to the class-II fumarase/aspartase family. Fumarase subfamily. Homotetramer.

The protein resides in the cytoplasm. The enzyme catalyses (S)-malate = fumarate + H2O. The protein operates within carbohydrate metabolism; tricarboxylic acid cycle; (S)-malate from fumarate: step 1/1. In terms of biological role, involved in the TCA cycle. Catalyzes the stereospecific interconversion of fumarate to L-malate. The chain is Fumarate hydratase class II from Leptospira interrogans serogroup Icterohaemorrhagiae serovar copenhageni (strain Fiocruz L1-130).